Here is a 63-residue protein sequence, read N- to C-terminus: SPbeta prophage-derived uncharacterized protein YotC (63 aa).

This chain is SPbeta prophage-derived uncharacterized protein YotC (yotC), found in Bacillus subtilis (strain 168).